The primary structure comprises 31 residues: Toxin BmKK16 (31 aa).

Glutamine 1 is subject to Pyrrolidone carboxylic acid. 3 disulfides stabilise this stretch: cysteine 4/cysteine 20, cysteine 10/cysteine 25, and cysteine 14/cysteine 27. Proline 31 is subject to Proline amide.

Belongs to the short scorpion toxin superfamily. Potassium channel inhibitor family. Alpha-KTx 17 subfamily. In terms of processing, the N-terminus is blocked. In terms of tissue distribution, expressed by the venom gland.

The protein localises to the secreted. Blocker of potassium channels (Kv). This Olivierus martensii (Manchurian scorpion) protein is Toxin BmKK16.